The primary structure comprises 1171 residues: ATP-dependent helicase/deoxyribonuclease subunit B (1171 aa).

In terms of domain architecture, UvrD-like helicase ATP-binding spans 1–343 (MSLRFVIGRA…LVAEENYRYR (343 aa)). 8–15 (GRAGSGKS) provides a ligand contact to ATP. One can recognise a UvrD-like helicase C-terminal domain in the interval 281-587 (MEQPRFHSPA…QFANIPPSLD (307 aa)). [4Fe-4S] cluster-binding residues include C805, C1129, C1132, and C1138.

It belongs to the helicase family. AddB/RexB type 1 subfamily. Heterodimer of AddA and AddB. The cofactor is Mg(2+). It depends on [4Fe-4S] cluster as a cofactor.

The heterodimer acts as both an ATP-dependent DNA helicase and an ATP-dependent, dual-direction single-stranded exonuclease. Recognizes the chi site generating a DNA molecule suitable for the initiation of homologous recombination. The AddB subunit has 5' -&gt; 3' nuclease activity but not helicase activity. The chain is ATP-dependent helicase/deoxyribonuclease subunit B from Bacillus thuringiensis subsp. konkukian (strain 97-27).